The following is a 208-amino-acid chain: Heart- and neural crest derivatives-expressed protein 2 (208 aa).

Disordered stretches follow at residues 79-106 (AGAV…TQSI) and 161-197 (EFKK…RTGW). The segment covering 88 to 103 (TVKRRPTANRKERRRT) has biased composition (basic residues). The 53-residue stretch at 90–142 (KRRPTANRKERRRTQSINSAFAELRECIPNVPADTKLSKIKTLRLATSYIAYL) folds into the bHLH domain. The segment covering 161–178 (EFKKTDAKEERRKKEMND) has biased composition (basic and acidic residues).

In terms of assembly, efficient DNA binding requires dimerization with another bHLH protein.

It localises to the nucleus. Essential for myocardial and pectoral fin differentiation, patterning and morphogenesis. The protein is Heart- and neural crest derivatives-expressed protein 2 (hand2) of Danio rerio (Zebrafish).